The chain runs to 227 residues: 7-cyano-7-deazaguanine synthase (227 aa).

Position 11–21 (11–21) interacts with ATP; the sequence is VSGGMDSAALL. Residues cysteine 192, cysteine 200, cysteine 203, and cysteine 206 each contribute to the Zn(2+) site.

The protein belongs to the QueC family. The cofactor is Zn(2+).

The catalysed reaction is 7-carboxy-7-deazaguanine + NH4(+) + ATP = 7-cyano-7-deazaguanine + ADP + phosphate + H2O + H(+). The protein operates within purine metabolism; 7-cyano-7-deazaguanine biosynthesis. In terms of biological role, catalyzes the ATP-dependent conversion of 7-carboxy-7-deazaguanine (CDG) to 7-cyano-7-deazaguanine (preQ(0)). In Persephonella marina (strain DSM 14350 / EX-H1), this protein is 7-cyano-7-deazaguanine synthase.